The primary structure comprises 459 residues: GTPase Der (459 aa).

EngA-type G domains follow at residues 3–167 (FTFA…PEPE) and 188–363 (IRVA…AVWN). Residues 9–16 (GRPNVGKS), 56–60 (DTAGL), 119–122 (NKSE), 194–201 (GRPNAGKS), 241–245 (DTAGL), and 306–309 (NKWD) contribute to the GTP site. Residues 364 to 448 (TRVSTAALNR…PVRITLREKA (85 aa)) enclose the KH-like domain.

It belongs to the TRAFAC class TrmE-Era-EngA-EngB-Septin-like GTPase superfamily. EngA (Der) GTPase family. As to quaternary structure, associates with the 50S ribosomal subunit.

Functionally, GTPase that plays an essential role in the late steps of ribosome biogenesis. The protein is GTPase Der of Rhodopseudomonas palustris (strain HaA2).